The primary structure comprises 74 residues: uncharacterized protein (74 aa).

This is an uncharacterized protein from Caenorhabditis elegans.